Consider the following 465-residue polypeptide: Casein kinase 1-like protein 2 (465 aa).

The Protein kinase domain occupies 9–277; it reads FRLGRKIGGG…LKRLFRDLFI (269 aa). Residues 15 to 23 and Lys38 each bind ATP; that span reads IGGGSFGEI. The active-site Proton acceptor is the Asp128. Disordered regions lie at residues 300–344 and 396–428; these read STPP…GIPR and REAA…VSRN. The segment covering 405-428 has biased composition (polar residues); the sequence is SEPSNPQIVEAGSGSNSKIPVSRN.

Belongs to the protein kinase superfamily. CK1 Ser/Thr protein kinase family. Casein kinase I subfamily. Monomer. In terms of processing, autophosphorylated.

The protein localises to the cytoplasm. The protein resides in the nucleus. It carries out the reaction L-seryl-[protein] + ATP = O-phospho-L-seryl-[protein] + ADP + H(+). The enzyme catalyses L-threonyl-[protein] + ATP = O-phospho-L-threonyl-[protein] + ADP + H(+). Casein kinases are operationally defined by their preferential utilization of acidic proteins such as caseins as substrates. It can phosphorylate a large number of proteins. The protein is Casein kinase 1-like protein 2 of Arabidopsis thaliana (Mouse-ear cress).